The chain runs to 209 residues: Outer-membrane lipoprotein LolB (209 aa).

Positions 1–17 (MATVFSRALGALVLGVA) are cleaved as a signal peptide. The N-palmitoyl cysteine moiety is linked to residue Cys18. Cys18 is lipidated: S-diacylglycerol cysteine.

Belongs to the LolB family. Monomer.

The protein localises to the cell outer membrane. Plays a critical role in the incorporation of lipoproteins in the outer membrane after they are released by the LolA protein. In Ralstonia nicotianae (strain ATCC BAA-1114 / GMI1000) (Ralstonia solanacearum), this protein is Outer-membrane lipoprotein LolB.